Here is a 322-residue protein sequence, read N- to C-terminus: Tyrosine recombinase XerC (322 aa).

The tract at residues 1–25 (MPEAAPPVADARGSSPTATTGPGAD) is disordered. Residues 16–25 (PTATTGPGAD) show a composition bias toward low complexity. Residues 25-111 (DATLSAVEPF…ACRSYYAWLL (87 aa)) form the Core-binding (CB) domain. Residues 132–309 (KLPQVLDADE…DFQHLAKVYD (178 aa)) form the Tyr recombinase domain. Catalysis depends on residues Arg-171, Lys-195, His-261, Arg-264, and His-287. Tyr-296 functions as the O-(3'-phospho-DNA)-tyrosine intermediate in the catalytic mechanism.

This sequence belongs to the 'phage' integrase family. XerC subfamily. In terms of assembly, forms a cyclic heterotetrameric complex composed of two molecules of XerC and two molecules of XerD.

Its subcellular location is the cytoplasm. In terms of biological role, site-specific tyrosine recombinase, which acts by catalyzing the cutting and rejoining of the recombining DNA molecules. The XerC-XerD complex is essential to convert dimers of the bacterial chromosome into monomers to permit their segregation at cell division. It also contributes to the segregational stability of plasmids. This Xanthomonas campestris pv. campestris (strain 8004) protein is Tyrosine recombinase XerC.